We begin with the raw amino-acid sequence, 393 residues long: 2,3,4,5-tetrahydropyridine-2,6-dicarboxylate N-succinyltransferase (393 aa).

Glu-261 functions as the Acyl-anhydride intermediate in the catalytic mechanism. Succinyl-CoA contacts are provided by residues Arg-263, Gly-278, Ser-281, Ala-304, 319–320 (DA), Gly-327, Lys-356, and 369–372 (RQDS).

This sequence belongs to the type 2 tetrahydrodipicolinate N-succinyltransferase family. As to quaternary structure, homotrimer.

It localises to the cytoplasm. The enzyme catalyses (S)-2,3,4,5-tetrahydrodipicolinate + succinyl-CoA + H2O = (S)-2-succinylamino-6-oxoheptanedioate + CoA. It participates in amino-acid biosynthesis; L-lysine biosynthesis via DAP pathway; LL-2,6-diaminopimelate from (S)-tetrahydrodipicolinate (succinylase route): step 1/3. Its function is as follows. Catalyzes the conversion of the cyclic tetrahydrodipicolinate (THDP) into the acyclic N-succinyl-L-2-amino-6-oxopimelate using succinyl-CoA. This is 2,3,4,5-tetrahydropyridine-2,6-dicarboxylate N-succinyltransferase from Nitratiruptor sp. (strain SB155-2).